A 377-amino-acid chain; its full sequence is Alanine racemase (377 aa).

Residue lysine 35 is the Proton acceptor; specific for D-alanine of the active site. An N6-(pyridoxal phosphate)lysine modification is found at lysine 35. Position 130 (arginine 130) interacts with substrate. Tyrosine 260 acts as the Proton acceptor; specific for L-alanine in catalysis. Position 312 (methionine 312) interacts with substrate.

Belongs to the alanine racemase family. It depends on pyridoxal 5'-phosphate as a cofactor.

The enzyme catalyses L-alanine = D-alanine. The protein operates within amino-acid biosynthesis; D-alanine biosynthesis; D-alanine from L-alanine: step 1/1. Functionally, catalyzes the interconversion of L-alanine and D-alanine. May also act on other amino acids. The chain is Alanine racemase (alr) from Leptothrix cholodnii (strain ATCC 51168 / LMG 8142 / SP-6) (Leptothrix discophora (strain SP-6)).